A 549-amino-acid polypeptide reads, in one-letter code: Probable protein kinase UbiB (549 aa).

The Protein kinase domain maps to 123 to 501 (DFNETPLASA…QQQAHKSNYL (379 aa)). ATP is bound by residues 129–137 (LASASISQV) and lysine 152. Aspartate 287 functions as the Proton acceptor in the catalytic mechanism. 2 helical membrane passes run 498 to 518 (SNYL…LFNQ) and 520 to 540 (ATLW…IIGW).

This sequence belongs to the ABC1 family. UbiB subfamily.

It is found in the cell inner membrane. It participates in cofactor biosynthesis; ubiquinone biosynthesis [regulation]. Functionally, is probably a protein kinase regulator of UbiI activity which is involved in aerobic coenzyme Q (ubiquinone) biosynthesis. This is Probable protein kinase UbiB from Shewanella sp. (strain MR-7).